The primary structure comprises 355 residues: F-box only protein 32 (355 aa).

The Nuclear localization signal motif lies at 62–67 (KKRKKD). Residues 169-173 (LLQTL) carry the Nuclear export signal motif. The F-box domain occupies 223-271 (LTITDLPVCLQLNIMQRLSDGRDLVSLGQAAPDLHVLSEDRLLWKRLCQ). A Bipartite nuclear localization signal motif is present at residues 280–295 (RKRLILSDKGQLDWKK).

In terms of assembly, part of the SCF (SKP1-CUL1-F-box) E3 ubiquitin-protein ligase complex SCF(FBXO32) formed of CUL1, SKP1, RBX1 and FBXO32. In terms of tissue distribution, specifically expressed in cardiac and skeletal muscle.

It localises to the cytoplasm. Its subcellular location is the nucleus. It participates in protein modification; protein ubiquitination. Its function is as follows. Substrate recognition component of a SCF (SKP1-CUL1-F-box protein) E3 ubiquitin-protein ligase complex which mediates the ubiquitination and subsequent proteasomal degradation of target proteins. Probably recognizes and binds to phosphorylated target proteins during skeletal muscle atrophy. Recognizes TERF1. The protein is F-box only protein 32 (Fbxo32) of Mus musculus (Mouse).